Reading from the N-terminus, the 873-residue chain is E3 ubiquitin-protein ligase UPL5 (873 aa).

Positions 1–19 (MTLSRSSADDSTNNANRSY) are enriched in polar residues. Disordered stretches follow at residues 1–37 (MTLS…DSSD) and 70–90 (RSGE…SNRP). One can recognise a Ubiquitin-like domain in the interval 95 to 171 (LQIFVRMMSG…LQLVARMQST (77 aa)). The C-type lectin domain occupies 272-296 (CLPIVLEFCKLLRKVCPDQKLYVTC). The HECT domain maps to 532–873 (SPEALHGGLF…DHVSSSFGKW (342 aa)). The active-site Glycyl thioester intermediate is Cys-839.

This sequence belongs to the UPL family. In terms of assembly, interacts with WRKY53.

It is found in the cytoplasm. The catalysed reaction is S-ubiquitinyl-[E2 ubiquitin-conjugating enzyme]-L-cysteine + [acceptor protein]-L-lysine = [E2 ubiquitin-conjugating enzyme]-L-cysteine + N(6)-ubiquitinyl-[acceptor protein]-L-lysine.. It participates in protein modification; protein ubiquitination. In terms of biological role, E3 ubiquitin protein ligase that regulates leaf senescence through ubiquitination and subsequent degradation of WRKY53. This chain is E3 ubiquitin-protein ligase UPL5 (UPL5), found in Arabidopsis thaliana (Mouse-ear cress).